Consider the following 425-residue polypeptide: Serine hydroxymethyltransferase (425 aa).

(6S)-5,6,7,8-tetrahydrofolate-binding positions include L122 and 126–128 (GHL). K231 carries the N6-(pyridoxal phosphate)lysine modification. Residue 355 to 357 (SPF) coordinates (6S)-5,6,7,8-tetrahydrofolate.

This sequence belongs to the SHMT family. As to quaternary structure, homodimer. The cofactor is pyridoxal 5'-phosphate.

It is found in the cytoplasm. It catalyses the reaction (6R)-5,10-methylene-5,6,7,8-tetrahydrofolate + glycine + H2O = (6S)-5,6,7,8-tetrahydrofolate + L-serine. It functions in the pathway one-carbon metabolism; tetrahydrofolate interconversion. Its pathway is amino-acid biosynthesis; glycine biosynthesis; glycine from L-serine: step 1/1. Its function is as follows. Catalyzes the reversible interconversion of serine and glycine with tetrahydrofolate (THF) serving as the one-carbon carrier. This reaction serves as the major source of one-carbon groups required for the biosynthesis of purines, thymidylate, methionine, and other important biomolecules. Also exhibits THF-independent aldolase activity toward beta-hydroxyamino acids, producing glycine and aldehydes, via a retro-aldol mechanism. The chain is Serine hydroxymethyltransferase from Rippkaea orientalis (strain PCC 8801 / RF-1) (Cyanothece sp. (strain PCC 8801)).